The following is a 282-amino-acid chain: uncharacterized protein (282 aa).

Positions 4–80 (STLTSKLESL…VDYLSDEKQY (77 aa)) constitute an HTH rpiR-type domain. Residues 40–59 (VAELAQAAGVSSASVIRFTR) constitute a DNA-binding region (H-T-H motif). One can recognise an SIS domain in the interval 125–265 (IAQKIVEAKR…FFKYLTLTNE (141 aa)).

This is an uncharacterized protein from Providencia stuartii.